The primary structure comprises 306 residues: Recombination-associated protein RdgC (306 aa).

The protein belongs to the RdgC family.

The protein localises to the cytoplasm. The protein resides in the nucleoid. Its function is as follows. May be involved in recombination. The chain is Recombination-associated protein RdgC from Burkholderia ambifaria (strain MC40-6).